We begin with the raw amino-acid sequence, 396 residues long: Elongation factor Tu (396 aa).

Residues 10–206 (KPHVNIGTIG…ACDTYIPAPV (197 aa)) enclose the tr-type G domain. The tract at residues 19 to 26 (GHVDHGKT) is G1. 19-26 (GHVDHGKT) is a GTP binding site. T26 is a Mg(2+) binding site. Positions 60 to 64 (GITIS) are G2. A G3 region spans residues 81 to 84 (DCPG). GTP contacts are provided by residues 81 to 85 (DCPGH) and 136 to 139 (NKVD). The segment at 136 to 139 (NKVD) is G4. Residues 174–176 (SAL) are G5.

This sequence belongs to the TRAFAC class translation factor GTPase superfamily. Classic translation factor GTPase family. EF-Tu/EF-1A subfamily. In terms of assembly, monomer.

It is found in the cytoplasm. It carries out the reaction GTP + H2O = GDP + phosphate + H(+). Its function is as follows. GTP hydrolase that promotes the GTP-dependent binding of aminoacyl-tRNA to the A-site of ribosomes during protein biosynthesis. In Bdellovibrio bacteriovorus (strain ATCC 15356 / DSM 50701 / NCIMB 9529 / HD100), this protein is Elongation factor Tu.